Reading from the N-terminus, the 156-residue chain is Peptide methionine sulfoxide reductase MsrA (156 aa).

Cys10 is an active-site residue.

Belongs to the MsrA Met sulfoxide reductase family.

It carries out the reaction L-methionyl-[protein] + [thioredoxin]-disulfide + H2O = L-methionyl-(S)-S-oxide-[protein] + [thioredoxin]-dithiol. The catalysed reaction is [thioredoxin]-disulfide + L-methionine + H2O = L-methionine (S)-S-oxide + [thioredoxin]-dithiol. Functionally, has an important function as a repair enzyme for proteins that have been inactivated by oxidation. Catalyzes the reversible oxidation-reduction of methionine sulfoxide in proteins to methionine. The polypeptide is Peptide methionine sulfoxide reductase MsrA (Acidobacterium capsulatum (strain ATCC 51196 / DSM 11244 / BCRC 80197 / JCM 7670 / NBRC 15755 / NCIMB 13165 / 161)).